Here is a 385-residue protein sequence, read N- to C-terminus: Glutamate 5-kinase (385 aa).

Lys18 lines the ATP pocket. Substrate contacts are provided by Ser57, Asp144, and Asn156. Residue 218-224 (TGGMKSK) participates in ATP binding. A PUA domain is found at 283–361 (RGVLSIDAGA…SRIEQVLGHK (79 aa)).

This sequence belongs to the glutamate 5-kinase family.

It localises to the cytoplasm. It carries out the reaction L-glutamate + ATP = L-glutamyl 5-phosphate + ADP. The protein operates within amino-acid biosynthesis; L-proline biosynthesis; L-glutamate 5-semialdehyde from L-glutamate: step 1/2. In terms of biological role, catalyzes the transfer of a phosphate group to glutamate to form L-glutamate 5-phosphate. This chain is Glutamate 5-kinase, found in Syntrophus aciditrophicus (strain SB).